The sequence spans 379 residues: Alcohol dehydrogenase 2 (379 aa).

C48 serves as a coordination point for Zn(2+). NAD(+) is bound at residue 49 to 53; that stretch reads HTDML. The Zn(2+) site is built by H69, C100, C103, C106, C114, and C178. NAD(+)-binding positions include 203-208, D227, K232, 275-277, 298-300, and 321-323; these read GLGAVG, TGI, IGA, and TTF.

This sequence belongs to the zinc-containing alcohol dehydrogenase family. Class-IV subfamily. As to quaternary structure, homodimer. It depends on Zn(2+) as a cofactor. As to expression, expressed in flowers and disk florets.

It carries out the reaction (R,R)-chrysanthemol + NAD(+) = (1R,3R)-chrysanthemal + NADH + H(+). It catalyses the reaction nerol + NAD(+) = neral + NADH + H(+). The catalysed reaction is (S)-(-)-citronellol + NAD(+) = (S)-(-)-citronellal + NADH + H(+). The enzyme catalyses perillyl alcohol + NAD(+) = perillyl aldehyde + NADH + H(+). It carries out the reaction (6E)-8-hydroxygeraniol + NAD(+) = (6E)-8-hydroxygeranial + NADH + H(+). It catalyses the reaction (2E)-geraniol + NAD(+) = (2E)-geranial + NADH + H(+). Its pathway is isoprenoid biosynthesis. Component of the monoterpenoid pyrethrins biosynthesis; pyrethrins are widely used plant-derived pesticide. Mediates the conversion of trans-chrysanthemol into trans-chrysanthemal. The polypeptide is Alcohol dehydrogenase 2 (Tanacetum cinerariifolium (Dalmatian daisy)).